A 161-amino-acid polypeptide reads, in one-letter code: Nucleotide-binding protein Reut_A2760 (161 aa).

It belongs to the YajQ family.

In terms of biological role, nucleotide-binding protein. This is Nucleotide-binding protein Reut_A2760 from Cupriavidus pinatubonensis (strain JMP 134 / LMG 1197) (Cupriavidus necator (strain JMP 134)).